Consider the following 248-residue polypeptide: MSGRKFFVGGNWKMNGDKKSIEELANTLNSAKLNPDTEVVCGAPTIYLDYARSKLDPNIDVAAQNCYKVAKGAFTGEISPAMIKDCGVKWVILGHSERRHVFGESDELIGQKVAHALENGLGVIACIGEKLDEREAGITEKVVFAQTKFIADNVKDWSKVVLAYEPVWAIGTGKTASPQQAQEVHDKLRQWLKTNVSEAVANSVRIIYGGSVTGGTCKELASQKDLDGFLVGGASLKPEFIDIINAKA.

The substrate site is built by asparagine 11 and lysine 13. Histidine 95 serves as the catalytic Electrophile. The active-site Proton acceptor is the glutamate 165.

This sequence belongs to the triosephosphate isomerase family. In terms of assembly, homodimer.

It localises to the cytoplasm. The catalysed reaction is dihydroxyacetone phosphate = methylglyoxal + phosphate. The enzyme catalyses D-glyceraldehyde 3-phosphate = dihydroxyacetone phosphate. It participates in carbohydrate degradation; glycolysis; D-glyceraldehyde 3-phosphate from glycerone phosphate: step 1/1. Its pathway is carbohydrate biosynthesis; gluconeogenesis. Its function is as follows. Triosephosphate isomerase is an extremely efficient metabolic enzyme that catalyzes the interconversion between dihydroxyacetone phosphate (DHAP) and D-glyceraldehyde-3-phosphate (G3P) in glycolysis and gluconeogenesis. Functionally, it is also responsible for the non-negligible production of methylglyoxal a reactive cytotoxic side-product that modifies and can alter proteins, DNA and lipids. This Danio rerio (Zebrafish) protein is Triosephosphate isomerase B (tpi1b).